Consider the following 437-residue polypeptide: Magnetosome protein MamN (437 aa).

11 helical membrane passes run 26-46 (LAVLAGAAALVVIGTISGSYT), 53-73 (SVYFETLALIFGMAAISALLA), 95-115 (WILVMMALVTYGISLASNSLV), 136-156 (VPVIIAEIIAANLGGASTMIG), 174-194 (FIAGMMPVCLILLAVMLVFFE), 226-246 (LLSYGLIIFGVTVAGLILAGP), 252-268 (GWIAFVAGVTALGLGRF), 281-301 (DILFYGGLFVMVGALTSVGIL), 320-340 (AILLMWMAAAVTIFVGGGTSA), 358-378 (AAWWALALGIMAGSVAALPGA), and 416-436 (WGMPLMGIFLVLGTVYIAVLV).

It belongs to the arsenite-antimonite (ArsB) efflux (TC 2.A.45) family.

It localises to the magnetosome membrane. Functionally, plays a role in biomineralization; might regulate pH in the magnetosome. This Paramagnetospirillum magneticum (strain ATCC 700264 / AMB-1) (Magnetospirillum magneticum) protein is Magnetosome protein MamN (mamN).